The sequence spans 209 residues: Rac-like GTP-binding protein ARAC9 (209 aa).

25 to 32 provides a ligand contact to GTP; it reads GDGAVGKT. An Effector region motif is present at residues 47-55; sequence YVPTVFDNF. Residues 72–76 and 130–133 each bind GTP; these read DTAGQ and TKSD. A Cysteine methyl ester modification is found at cysteine 206. Cysteine 206 is lipidated: S-geranylgeranyl cysteine. A propeptide spans 207-209 (removed in mature form); it reads HVL.

The protein belongs to the small GTPase superfamily. Rho family. In terms of assembly, interacts with SPK1.

It localises to the cytoplasm. It is found in the membrane. Functionally, inactive GDP-bound Rho GTPases reside in the cytosol, are found in a complex with Rho GDP-dissociation inhibitors (Rho GDIs), and are released from the GDI protein in order to translocate to membranes upon activation. The chain is Rac-like GTP-binding protein ARAC9 (ARAC9) from Arabidopsis thaliana (Mouse-ear cress).